The following is a 145-amino-acid chain: MAISPGPLFLIFVLGLVVIPPTLAQDDSRYTKFLTQHHDAKPKGRDDRYCERMMKRRSLTSPCKDVNTFIHGNKSNIKAICGANGSPYRENLRMSKSPFQVTTCKHTGGSPRPPCQYRASAGFRHVVIACENGLPVHFDESFFSL.

The N-terminal stretch at 1-24 (MAISPGPLFLIFVLGLVVIPPTLA) is a signal peptide. A Pyrrolidone carboxylic acid modification is found at Gln-25. The Proton acceptor role is filled by His-37. TRNA-binding residues include Arg-45 and Asp-46. 3 disulfide bridges follow: Cys-50/Cys-104, Cys-63/Cys-115, and Cys-81/Cys-130. Positions 55–59 (KRRSL) match the Nucleolar localization signal motif. TRNA contacts are provided by Cys-104 and Val-126. The Proton donor role is filled by His-137.

The protein belongs to the pancreatic ribonuclease family. As to quaternary structure, homodimer. Interacts with RNH1; inhibiting ANG ribonuclease activity. Interacts with PCNA.

It localises to the secreted. The protein resides in the nucleus. The protein localises to the nucleolus. It is found in the cytoplasm. Its subcellular location is the stress granule. Its activity is regulated as follows. Has weak tRNA ribonuclease activity by itself due to partial autoinhibition by its C-terminus (residues 139-145), which folds into a short alpha-helix that partially occludes the substrate-binding site. In absence of stress, the ribonuclease activity is inhibited by RNH1 in the cytoplasm. In response to stress, dissociates from RNH1 in the cytoplasm and associates with cytoplasmic ribosomes with vacant A-sites: ribosomes directly activate the tRNA ribonuclease activity of ANG by refolding the C-terminal alpha-helix. In response to stress, the angiogenic activity of ANG is inhibited by RNH1 in the nucleus. In terms of biological role, secreted ribonuclease that can either promote or restrict cell proliferation of target cells, depending on the context. Endocytosed in target cells via its receptor PLXNB2 and translocates to the cytoplasm or nucleus. Under stress conditions, localizes to the cytoplasm and promotes the assembly of stress granules (SGs): specifically cleaves a subset of tRNAs within anticodon loops to produce tRNA-derived stress-induced fragments (tiRNAs), resulting in translation repression and inhibition of cell proliferation. tiRNas also prevent formation of apoptosome, thereby promoting cell survival. Preferentially cleaves RNAs between a pyrimidine and an adenosine residue, suggesting that it cleaves the anticodon loop of tRNA(Ala) (32-UUAGCAU-38) after positions 33 and 36. Cleaves a subset of tRNAs, including tRNA(Ala), tRNA(Glu), tRNA(Gly), tRNA(Lys), tRNA(Val), tRNA(His), tRNA(Asp) and tRNA(Sec). Under growth conditions and in differentiated cells, translocates to the nucleus and stimulates ribosomal RNA (rRNA) transcription, including that containing the initiation site sequences of 45S rRNA, thereby promoting cell growth and proliferation. Angiogenin induces vascularization of normal and malignant tissues via its ability to promote rRNA transcription. Involved in hematopoietic stem and progenitor cell (HSPC) growth and survival by promoting rRNA transcription in growth conditions and inhibiting translation in response to stress, respectively. Mediates the crosstalk between myeloid and intestinal epithelial cells to protect the intestinal epithelial barrier integrity: secreted by myeloid cells and promotes intestinal epithelial cells proliferation and survival. Also mediates osteoclast-endothelial cell crosstalk in growing bone: produced by osteoclasts and protects the neighboring vascular cells against senescence by promoting rRNA transcription. The polypeptide is Angiogenin (Mus musculus (Mouse)).